The following is a 154-amino-acid chain: Putative thioredoxin H10 (154 aa).

The Thioredoxin domain occupies 24–148; the sequence is NNNNSYGQTR…LQKKTAAAAD (125 aa). Active-site nucleophile residues include cysteine 74 and cysteine 77. An intrachain disulfide couples cysteine 74 to cysteine 77.

This sequence belongs to the thioredoxin family.

It localises to the cytoplasm. Functionally, probable thiol-disulfide oxidoreductase that may be involved in the redox regulation of a number of cytosolic enzymes. The sequence is that of Putative thioredoxin H10 from Arabidopsis thaliana (Mouse-ear cress).